The sequence spans 135 residues: MLSPKRTRFRKQHRGRMKGMSYRGSHICFGRYALQALEPSWITSRQIEAGRRAMTRYARRGGKIWVRIFPDKPVTIRPAETRMGSGKGSPEYWVSVVKPGRILYEMGGVSETVARAAIEIAASKMPIRTQFIIAG.

The protein belongs to the universal ribosomal protein uL16 family. Part of the 50S ribosomal subunit.

The protein resides in the plastid. The protein localises to the chloroplast. This chain is Large ribosomal subunit protein uL16c, found in Acorus calamus var. americanus (American sweet flag).